Consider the following 890-residue polypeptide: Probable LRR receptor-like serine/threonine-protein kinase At1g51860 (890 aa).

A signal peptide spans 1–23 (MKSLHWFLHLLIIAFTVLRSVEA). At 24 to 513 (QNQAGFISLD…KESKKVPMVA (490 aa)) the chain is on the extracellular side. Residues Asn-49, Asn-96, Asn-142, Asn-181, Asn-256, Asn-285, Asn-289, Asn-295, Asn-312, Asn-332, Asn-340, Asn-402, and Asn-419 are each glycosylated (N-linked (GlcNAc...) asparagine). LRR repeat units follow at residues 412–435 (RIIS…SKLT), 436–458 (LLTV…FAEM), and 460–481 (SLKL…PDSL). Asn-465, Asn-473, and Asn-497 each carry an N-linked (GlcNAc...) asparagine glycan. The chain crosses the membrane as a helical span at residues 514–534 (IAASVAGVFALLVILAIFFVI). Topologically, residues 535–890 (KRKNVKAHKS…STSDFAPGAR (356 aa)) are cytoplasmic. At Thr-575 the chain carries Phosphothreonine. One can recognise a Protein kinase domain in the interval 584-856 (NNFERVLGKG…HVVMELNDCV (273 aa)). ATP contacts are provided by residues 590–598 (LGKGGFGTV) and Lys-611. The residue at position 656 (Tyr-656) is a Phosphotyrosine. The active-site Proton acceptor is the Asp-708. Ser-742 bears the Phosphoserine mark. Residues Thr-743 and Thr-748 each carry the phosphothreonine modification. The residue at position 756 (Tyr-756) is a Phosphotyrosine.

The protein belongs to the protein kinase superfamily. Ser/Thr protein kinase family.

The protein resides in the membrane. It carries out the reaction L-seryl-[protein] + ATP = O-phospho-L-seryl-[protein] + ADP + H(+). The enzyme catalyses L-threonyl-[protein] + ATP = O-phospho-L-threonyl-[protein] + ADP + H(+). This chain is Probable LRR receptor-like serine/threonine-protein kinase At1g51860, found in Arabidopsis thaliana (Mouse-ear cress).